The following is a 431-amino-acid chain: Citrate synthase 1 (431 aa).

Active-site residues include histidine 309 and aspartate 366.

It belongs to the citrate synthase family. As to quaternary structure, homohexamer.

It carries out the reaction oxaloacetate + acetyl-CoA + H2O = citrate + CoA + H(+). The protein operates within carbohydrate metabolism; tricarboxylic acid cycle; isocitrate from oxaloacetate: step 1/2. This is Citrate synthase 1 (gltA2) from Mycobacterium tuberculosis (strain CDC 1551 / Oshkosh).